The sequence spans 64 residues: Alpha-conotoxin SI (64 aa).

The first 21 residues, Met-1–Ser-21, serve as a signal peptide directing secretion. Positions Phe-22–Glu-49 are excised as a propeptide. The tract at residues Pro-23 to Arg-47 is disordered. The segment covering Arg-26–Arg-47 has biased composition (basic and acidic residues). 2 cysteine pairs are disulfide-bonded: Cys-51-Cys-56 and Cys-52-Cys-62. Residue Cys-62 is modified to Cysteine amide.

It belongs to the conotoxin A superfamily. Expressed by the venom duct.

It localises to the secreted. Alpha-conotoxins act on postsynaptic membranes, they bind to the nicotinic acetylcholine receptors (nAChR) and thus inhibit them. Is active on muscle nAChR (IC(50)=113 nM on adult subtype (alpha-1-beta-1-gamma-delta/CHRNA1-CHRNB1-CHRNG-CHRND) and IC(50)=142 nM on fetal subtype (alpha-1-beta-1-delta-epsilon/CHRNA1-CHRNB1-CHRND-CHRNE)). On mice muscle receptors, its higher affinity site is the alpha/delta nAChR subunit interface. On Torpedo receptors, it does not distinguish between alpha/delta and alpha/gamma acetylcholine-binding sites. In vivo, causes paralysis followed by death when injected into goldfish. In contrast, has no effect on mice, when similar doses are intraperitoneally or intracerebrally injected. The chain is Alpha-conotoxin SI from Conus striatus (Striated cone).